A 533-amino-acid chain; its full sequence is (E)-beta-farnesene synthase (533 aa).

Mg(2+) contacts are provided by Asp286 and Asp290. Substrate-binding residues include Asp286, Asp290, Arg427, and Asn430. Residues 286–290 carry the DDXXD motif motif; that stretch reads DDMMD. The Mg(2+) site is built by Asn430 and Glu438.

The protein belongs to the terpene synthase family. As to quaternary structure, monomer. Mg(2+) is required as a cofactor. The cofactor is Mn(2+).

It is found in the cytoplasm. The enzyme catalyses (2E,6E)-farnesyl diphosphate = (E)-beta-farnesene + diphosphate. It catalyses the reaction (2E,6E)-farnesyl diphosphate = alpha-copaene + diphosphate. The catalysed reaction is (2E,6E)-farnesyl diphosphate = (1S,5S,6R)-alpha-bergamotene + diphosphate. It carries out the reaction (2E,6E)-farnesyl diphosphate = (-)-(E)-beta-caryophyllene + diphosphate. The enzyme catalyses (2E,6E)-farnesyl diphosphate = delta-cadinene + diphosphate. It catalyses the reaction (2E,6E)-farnesyl diphosphate = (+)-germacrene D + diphosphate. The catalysed reaction is (2E,6E)-farnesyl diphosphate = alpha-zingiberene + diphosphate. It carries out the reaction (2E,6E)-farnesyl diphosphate = alpha-muurolene + diphosphate. The enzyme catalyses (2E,6E)-farnesyl diphosphate = (S)-beta-bisabolene + diphosphate. It catalyses the reaction (2E,6E)-farnesyl diphosphate = beta-sesquiphellandrene + diphosphate. The catalysed reaction is (2E,6E)-farnesyl diphosphate = sesquisabinene A + diphosphate. It functions in the pathway secondary metabolite biosynthesis; terpenoid biosynthesis. Functionally, sesquiterpene cyclase catalyzing mainly the production of beta-farnesene and alpha-bergamotene in equal amounts from farnesyl diphosphate. Also mediates the biosynthesis of minor sesquiterpene hydrocarbons including alpha-muurolene, beta-bisabolene, zingiberene, sesquiphellandrene, sesquisabinene A, germacrene D, delta-cadinene, alpha-copaene and (E)-beta-caryophyllene. Involved in indirect defense by producing volatile signals attracting natural enemies of herbivores. This Zea mays (Maize) protein is (E)-beta-farnesene synthase.